A 464-amino-acid chain; its full sequence is Fumarate hydratase class II (464 aa).

Substrate-binding positions include 96–98, 127–130, 137–139, and Thr185; these read SGT, HPND, and SSN. His186 functions as the Proton donor/acceptor in the catalytic mechanism. Ser316 is a catalytic residue. Residues Ser317 and 322-324 contribute to the substrate site; that span reads KVN.

It belongs to the class-II fumarase/aspartase family. Fumarase subfamily. Homotetramer.

Its subcellular location is the cytoplasm. It carries out the reaction (S)-malate = fumarate + H2O. It functions in the pathway carbohydrate metabolism; tricarboxylic acid cycle; (S)-malate from fumarate: step 1/1. Functionally, involved in the TCA cycle. Catalyzes the stereospecific interconversion of fumarate to L-malate. The polypeptide is Fumarate hydratase class II (Pseudomonas putida (strain ATCC 47054 / DSM 6125 / CFBP 8728 / NCIMB 11950 / KT2440)).